The sequence spans 393 residues: RNA polymerase II holoenzyme cyclin-like subunit (393 aa).

Residues 51 to 146 form the Cyclin N-terminal domain; that stretch reads ICKRLNLRQR…LLEEMEFDMV (96 aa).

Belongs to the cyclin family. Cyclin C subfamily. As to quaternary structure, component of the SRB8-11 complex, a regulatory module of the Mediator complex.

It is found in the nucleus. In terms of biological role, component of the SRB8-11 complex. The SRB8-11 complex is a regulatory module of the Mediator complex which is itself involved in regulation of basal and activated RNA polymerase II-dependent transcription. The SRB8-11 complex may be involved in the transcriptional repression of a subset of genes regulated by Mediator. It may inhibit the association of the Mediator complex with RNA polymerase II to form the holoenzyme complex. The SRB8-11 complex phosphorylates the C-terminal domain (CTD) of the largest subunit of RNA polymerase II. The protein is RNA polymerase II holoenzyme cyclin-like subunit (SSN8) of Mycosarcoma maydis (Corn smut fungus).